A 1034-amino-acid chain; its full sequence is Multidrug export protein AcrF (1034 aa).

The Cytoplasmic portion of the chain corresponds to Met-1–Pro-9. A helical membrane pass occupies residues Ile-10 to Leu-28. Over Gln-29–Glu-339 the chain is Periplasmic. The chain crosses the membrane as a helical span at residues Val-340–Leu-359. The Cytoplasmic segment spans residues Gln-360 to Thr-365. The chain crosses the membrane as a helical span at residues Leu-366–Ala-385. Over Phe-386 to Asn-391 the chain is Periplasmic. The chain crosses the membrane as a helical span at residues Thr-392–Val-413. Residues Glu-414–Ala-441 are Cytoplasmic-facing. A helical membrane pass occupies residues Leu-442–Gly-460. The Periplasmic segment spans residues Gly-461 to Thr-473. The chain crosses the membrane as a helical span at residues Ile-474–Leu-496. Residues Leu-497 to Thr-537 lie on the Cytoplasmic side of the membrane. A helical membrane pass occupies residues Gly-538–Leu-556. The Periplasmic segment spans residues Arg-557–Gln-871. A helical transmembrane segment spans residues Ala-872–Tyr-891. The Cytoplasmic segment spans residues Glu-892–Pro-897. A helical transmembrane segment spans residues Val-898–Leu-917. Residues Phe-918–Asp-923 lie on the Periplasmic side of the membrane. The helical transmembrane segment at Val-924 to Val-945 threads the bilayer. Topologically, residues Glu-946–Pro-973 are cytoplasmic. Residues Ile-974–Asn-992 traverse the membrane as a helical segment. The Periplasmic segment spans residues Gly-993–Gly-1005. Residues Val-1006 to Ile-1028 traverse the membrane as a helical segment. The Cytoplasmic segment spans residues Arg-1029 to Gly-1034.

This sequence belongs to the resistance-nodulation-cell division (RND) (TC 2.A.6) family. In terms of assembly, part of the tripartite efflux system AcrEF-TolC, which is composed of an inner membrane transporter, AcrF, a periplasmic membrane fusion protein, AcrE, and an outer membrane component, TolC. The complex forms a large protein conduit and can translocate molecules across both the inner and outer membranes.

The protein resides in the cell inner membrane. Functionally, part of the tripartite efflux system AcrEF-TolC. Involved in the efflux of indole and organic solvents. The protein is Multidrug export protein AcrF (acrF) of Escherichia coli (strain K12).